A 447-amino-acid chain; its full sequence is Probable alpha-galactosidase B (447 aa).

Positions 1-22 (MTTFLSLTTAAAVLTLARGSNA) are cleaved as a signal peptide. Intrachain disulfides connect Cys45-Cys77 and Cys127-Cys157. The active-site Nucleophile is the Asp155. 2 N-linked (GlcNAc...) asparagine glycosylation sites follow: Asn162 and Asn180. 225-229 (NWGQA) contributes to the substrate binding site. Residue Asn236 is glycosylated (N-linked (GlcNAc...) asparagine). Asp247 functions as the Proton donor in the catalytic mechanism. A glycan (N-linked (GlcNAc...) asparagine) is linked at Asn286.

The protein belongs to the glycosyl hydrolase 27 family.

It is found in the secreted. It carries out the reaction Hydrolysis of terminal, non-reducing alpha-D-galactose residues in alpha-D-galactosides, including galactose oligosaccharides, galactomannans and galactolipids.. Its function is as follows. Hydrolyzes a variety of simple alpha-D-galactoside as well as more complex molecules such as oligosaccharides and polysaccharides. This Neosartorya fischeri (strain ATCC 1020 / DSM 3700 / CBS 544.65 / FGSC A1164 / JCM 1740 / NRRL 181 / WB 181) (Aspergillus fischerianus) protein is Probable alpha-galactosidase B (aglB).